Consider the following 529-residue polypeptide: Bifunctional purine biosynthesis protein PurH (529 aa).

An MGS-like domain is found at 1 to 148 (MQQRRPVRRA…KNHKDVAIVV (148 aa)). Lysine 287 is modified (N6-acetyllysine).

The protein belongs to the PurH family.

The enzyme catalyses (6R)-10-formyltetrahydrofolate + 5-amino-1-(5-phospho-beta-D-ribosyl)imidazole-4-carboxamide = 5-formamido-1-(5-phospho-D-ribosyl)imidazole-4-carboxamide + (6S)-5,6,7,8-tetrahydrofolate. It carries out the reaction IMP + H2O = 5-formamido-1-(5-phospho-D-ribosyl)imidazole-4-carboxamide. The protein operates within purine metabolism; IMP biosynthesis via de novo pathway; 5-formamido-1-(5-phospho-D-ribosyl)imidazole-4-carboxamide from 5-amino-1-(5-phospho-D-ribosyl)imidazole-4-carboxamide (10-formyl THF route): step 1/1. Its pathway is purine metabolism; IMP biosynthesis via de novo pathway; IMP from 5-formamido-1-(5-phospho-D-ribosyl)imidazole-4-carboxamide: step 1/1. The protein is Bifunctional purine biosynthesis protein PurH of Escherichia fergusonii (strain ATCC 35469 / DSM 13698 / CCUG 18766 / IAM 14443 / JCM 21226 / LMG 7866 / NBRC 102419 / NCTC 12128 / CDC 0568-73).